Here is a 467-residue protein sequence, read N- to C-terminus: ATP synthase subunit beta (467 aa).

156–163 (GGAGVGKT) provides a ligand contact to ATP.

It belongs to the ATPase alpha/beta chains family. F-type ATPases have 2 components, CF(1) - the catalytic core - and CF(0) - the membrane proton channel. CF(1) has five subunits: alpha(3), beta(3), gamma(1), delta(1), epsilon(1). CF(0) has three main subunits: a(1), b(2) and c(9-12). The alpha and beta chains form an alternating ring which encloses part of the gamma chain. CF(1) is attached to CF(0) by a central stalk formed by the gamma and epsilon chains, while a peripheral stalk is formed by the delta and b chains.

It is found in the cell inner membrane. The enzyme catalyses ATP + H2O + 4 H(+)(in) = ADP + phosphate + 5 H(+)(out). Its function is as follows. Produces ATP from ADP in the presence of a proton gradient across the membrane. The catalytic sites are hosted primarily by the beta subunits. In Cupriavidus necator (strain ATCC 17699 / DSM 428 / KCTC 22496 / NCIMB 10442 / H16 / Stanier 337) (Ralstonia eutropha), this protein is ATP synthase subunit beta.